The chain runs to 270 residues: tRNA pseudouridine synthase A (270 aa).

D52 functions as the Nucleophile in the catalytic mechanism. Y110 is a substrate binding site.

It belongs to the tRNA pseudouridine synthase TruA family. Homodimer.

It catalyses the reaction uridine(38/39/40) in tRNA = pseudouridine(38/39/40) in tRNA. In terms of biological role, formation of pseudouridine at positions 38, 39 and 40 in the anticodon stem and loop of transfer RNAs. This chain is tRNA pseudouridine synthase A, found in Paraburkholderia phytofirmans (strain DSM 17436 / LMG 22146 / PsJN) (Burkholderia phytofirmans).